The primary structure comprises 957 residues: SH3 domain-binding protein 4-A (957 aa).

Residues 54-113 form the SH3 1 domain; it reads ENVKEVVAIKDYCPNNFTTLKFSKGEHLYVLDASGGDWWYAHNSTEMGYIPSSYVQPLNY. Residues 312–449 enclose the ZU5 domain; that stretch reads TSIVCRLDSS…LEPVMYVVMV (138 aa). The SH3 2 domain occupies 649–719; sequence TSLKYGKLLK…HAKNVLVVGK (71 aa).

Homodimer or homooligomer.

It is found in the membrane. The protein localises to the clathrin-coated pit. Its subcellular location is the cytoplasmic vesicle. The protein resides in the clathrin-coated vesicle. It localises to the nucleus. Its function is as follows. Possible role in regulating endocytosis of the transferrin receptor at the plasma membrane. Alternatively, may function as a negative regulator of the amino acid-induced TOR signaling by inhibiting the formation of active Rag GTPase complexes. Preferentially binds inactive Rag GTPase complexes and prevents their interaction with the mTORC1 complex inhibiting its relocalization to lysosomes and its activation. Thereby, may indirectly regulate cell growth, proliferation and autophagy. The chain is SH3 domain-binding protein 4-A (sh3bp4-a) from Xenopus laevis (African clawed frog).